A 340-amino-acid polypeptide reads, in one-letter code: Fructose-1,6-bisphosphatase class 1 (340 aa).

Mg(2+) contacts are provided by Glu107, Asp126, Leu128, and Asp129. Asn215 is a binding site for substrate. Residue Glu287 participates in Mg(2+) binding.

This sequence belongs to the FBPase class 1 family. Homotetramer. Requires Mg(2+) as cofactor.

The protein resides in the cytoplasm. The enzyme catalyses beta-D-fructose 1,6-bisphosphate + H2O = beta-D-fructose 6-phosphate + phosphate. It functions in the pathway carbohydrate biosynthesis; gluconeogenesis. This is Fructose-1,6-bisphosphatase class 1 from Brucella suis (strain ATCC 23445 / NCTC 10510).